The chain runs to 222 residues: Large ribosomal subunit protein uL3 (222 aa).

The tract at residues 129 to 150 (HNFRGLPDSHGTERKHRSPGSI) is disordered.

The protein belongs to the universal ribosomal protein uL3 family. As to quaternary structure, part of the 50S ribosomal subunit. Forms a cluster with proteins L14 and L19.

Its function is as follows. One of the primary rRNA binding proteins, it binds directly near the 3'-end of the 23S rRNA, where it nucleates assembly of the 50S subunit. This is Large ribosomal subunit protein uL3 from Acidothermus cellulolyticus (strain ATCC 43068 / DSM 8971 / 11B).